The chain runs to 131 residues: Fumarate reductase subunit C (131 aa).

3 helical membrane-spanning segments follow: residues 30-50 (EGTA…LFAL), 63-83 (FLQN…ALLH), and 109-129 (IIKS…FVAL).

It belongs to the FrdC family. As to quaternary structure, part of an enzyme complex containing four subunits: a flavoprotein (FrdA), an iron-sulfur protein (FrdB), and two hydrophobic anchor proteins (FrdC and FrdD).

It is found in the cell inner membrane. Two distinct, membrane-bound, FAD-containing enzymes are responsible for the catalysis of fumarate and succinate interconversion; fumarate reductase is used in anaerobic growth, and succinate dehydrogenase is used in aerobic growth. Anchors the catalytic components of the fumarate reductase complex to the cell inner membrane, binds quinones. The sequence is that of Fumarate reductase subunit C from Shigella boydii serotype 4 (strain Sb227).